The sequence spans 158 residues: SsrA-binding protein (158 aa).

The protein belongs to the SmpB family.

The protein localises to the cytoplasm. Functionally, required for rescue of stalled ribosomes mediated by trans-translation. Binds to transfer-messenger RNA (tmRNA), required for stable association of tmRNA with ribosomes. tmRNA and SmpB together mimic tRNA shape, replacing the anticodon stem-loop with SmpB. tmRNA is encoded by the ssrA gene; the 2 termini fold to resemble tRNA(Ala) and it encodes a 'tag peptide', a short internal open reading frame. During trans-translation Ala-aminoacylated tmRNA acts like a tRNA, entering the A-site of stalled ribosomes, displacing the stalled mRNA. The ribosome then switches to translate the ORF on the tmRNA; the nascent peptide is terminated with the 'tag peptide' encoded by the tmRNA and targeted for degradation. The ribosome is freed to recommence translation, which seems to be the essential function of trans-translation. This chain is SsrA-binding protein, found in Parafrankia sp. (strain EAN1pec).